Reading from the N-terminus, the 243-residue chain is uncharacterized protein (243 aa).

It belongs to the methyltransferase superfamily.

This is an uncharacterized protein from Mycobacterium tuberculosis (strain CDC 1551 / Oshkosh).